A 203-amino-acid chain; its full sequence is Probable nicotinate-nucleotide adenylyltransferase (203 aa).

It belongs to the NadD family.

The catalysed reaction is nicotinate beta-D-ribonucleotide + ATP + H(+) = deamido-NAD(+) + diphosphate. The protein operates within cofactor biosynthesis; NAD(+) biosynthesis; deamido-NAD(+) from nicotinate D-ribonucleotide: step 1/1. In terms of biological role, catalyzes the reversible adenylation of nicotinate mononucleotide (NaMN) to nicotinic acid adenine dinucleotide (NaAD). This is Probable nicotinate-nucleotide adenylyltransferase from Prosthecochloris aestuarii (strain DSM 271 / SK 413).